Reading from the N-terminus, the 511-residue chain is MKKRALVSVSDKTGVVEFVKGLLEQGIEVISTGGTKKLLEENGLQVIGISEVTGFPEIMDGRVKTLHPNIHGGLLAVRDNETHVAQMNELGMEPIDFVIVNLYPFKETIAKPDVTFADAIENIDIGGPTMIRSAAKNHKFVSVIVDPVDYDVVLAELKENGEVKEETKRKLAAKVFRHTAAYDALISNYLTEQMGEESPETLTVTFEKKQDLRYGENPHQKATFYKAPFTVTSSVAYAEQLHGKELSYNNINDADAALSIVKEFTEPAVVAVKHMNPCGVGVGTDIHEAYTRAYEADPVSIFGGIIAANREIDKATAEKLHEIFLEIIIAPSFSKEALEVLQSKKNLRLLTVNIEKATSASKKLTSVQGGLLVQEEDTLSLDESTISIPTKREPSEQEWKDLKLAWKVVKHVKSNAIVLAKDDMTIGVGAGQMNRVGSAKIAITQAGEKAQGSALASDAFFPMPDTVEEAAKAGITAIIQPGGSIRDEDSIKVADTYGIAMVFTGVRHFKH.

One can recognise an MGS-like domain in the interval 1 to 145 (MKKRALVSVS…KNHKFVSVIV (145 aa)).

It belongs to the PurH family.

The catalysed reaction is (6R)-10-formyltetrahydrofolate + 5-amino-1-(5-phospho-beta-D-ribosyl)imidazole-4-carboxamide = 5-formamido-1-(5-phospho-D-ribosyl)imidazole-4-carboxamide + (6S)-5,6,7,8-tetrahydrofolate. The enzyme catalyses IMP + H2O = 5-formamido-1-(5-phospho-D-ribosyl)imidazole-4-carboxamide. Its pathway is purine metabolism; IMP biosynthesis via de novo pathway; 5-formamido-1-(5-phospho-D-ribosyl)imidazole-4-carboxamide from 5-amino-1-(5-phospho-D-ribosyl)imidazole-4-carboxamide (10-formyl THF route): step 1/1. It participates in purine metabolism; IMP biosynthesis via de novo pathway; IMP from 5-formamido-1-(5-phospho-D-ribosyl)imidazole-4-carboxamide: step 1/1. The chain is Bifunctional purine biosynthesis protein PurH from Bacillus cereus (strain 03BB102).